A 215-amino-acid chain; its full sequence is RxLR effector protein PITG_00582 (215 aa).

Positions 1–19 (MLPYKTLLLALGFFFTVQC) are cleaved as a signal peptide. Residues 39-51 (RLLRSPEKTDEER) carry the RxLR-dEER motif. The stretch at 81-149 (VAKQAKEMSN…QNELEKLAKQ (69 aa)) forms a coiled coil.

Belongs to the RxLR effector family.

It localises to the secreted. The protein localises to the host cell membrane. In terms of biological role, effector that might be involved in host plant infection. The chain is RxLR effector protein PITG_00582 from Phytophthora infestans (strain T30-4) (Potato late blight agent).